The sequence spans 229 residues: Flagellar L-ring protein (229 aa).

A signal peptide spans Met1–Gly25. The N-palmitoyl cysteine moiety is linked to residue Cys26. Cys26 is lipidated: S-diacylglycerol cysteine.

Belongs to the FlgH family. In terms of assembly, the basal body constitutes a major portion of the flagellar organelle and consists of four rings (L,P,S, and M) mounted on a central rod.

Its subcellular location is the cell outer membrane. It is found in the bacterial flagellum basal body. Assembles around the rod to form the L-ring and probably protects the motor/basal body from shearing forces during rotation. In Burkholderia cenocepacia (strain ATCC BAA-245 / DSM 16553 / LMG 16656 / NCTC 13227 / J2315 / CF5610) (Burkholderia cepacia (strain J2315)), this protein is Flagellar L-ring protein.